The sequence spans 540 residues: Upstream-binding protein 1 (540 aa).

Serine 22 carries the post-translational modification Phosphoserine. Residues 60 to 296 (EHPPFQYVMC…EQKKSSKRTL (237 aa)) enclose the Grh/CP2 DB domain. 2 disordered regions span residues 236 to 270 (KPKG…DTTI) and 285 to 368 (EHEQ…QPSA). A compositionally biased stretch (basic and acidic residues) spans 238-262 (KGADRKQKTDREKMEKRTAHEKEKY). Residues 320–368 (YVNNSPSPAPTFTSPQQSTCSVPDSNSSSPNHQGDGASQTSGEQIQPSA) are compositionally biased toward polar residues. Phosphoserine is present on residues serine 390 and serine 393.

The protein belongs to the grh/CP2 family. CP2 subfamily. As to quaternary structure, interacts with TFCP2. Interacts with PIAS1, and is probably part of a complex containing TFCP2, UBP1 and PIAS1. Expressed in adrenal tissue, JEG-3, NCI-H295A, Hep-G2 and HeLa cell lines.

Its subcellular location is the nucleus. Its function is as follows. Functions as a transcriptional activator in a promoter context-dependent manner. Modulates the placental expression of CYP11A1. Involved in regulation of the alpha-globin gene in erythroid cells. Activation of the alpha-globin promoter in erythroid cells is via synergistic interaction with TFCP2. Involved in regulation of the alpha-globin gene in erythroid cells. Binds strongly to sequences around the HIV-1 initiation site and weakly over the TATA-box. Represses HIV-1 transcription by inhibiting the binding of TFIID to the TATA-box. In Homo sapiens (Human), this protein is Upstream-binding protein 1 (UBP1).